A 576-amino-acid polypeptide reads, in one-letter code: DNA primase (576 aa).

Residues 40–64 (CPFHNEKTPSFNVVAKKQFYHCFGC) form a CHC2-type zinc finger. One can recognise a Toprim domain in the interval 251–333 (DSIIVVEGYM…GLDAGFIFLP (83 aa)). Mg(2+) contacts are provided by Glu257, Asp301, and Asp303.

The protein belongs to the DnaG primase family. In terms of assembly, monomer. Interacts with DnaB. The cofactor is Zn(2+). It depends on Mg(2+) as a cofactor.

The catalysed reaction is ssDNA + n NTP = ssDNA/pppN(pN)n-1 hybrid + (n-1) diphosphate.. Functionally, RNA polymerase that catalyzes the synthesis of short RNA molecules used as primers for DNA polymerase during DNA replication. This chain is DNA primase, found in Legionella pneumophila.